The primary structure comprises 282 residues: MTDRLSQLIQAVEEADSSKLLLEAVQNLAAARLEGAIPILIEALSYNNPGAAVASVDGLILLGSAAVPPLLELLDMHNYTARAWAIRALAGIGDPRGLVTLLGVATADFAMSVRRAAVKGLGTMKWHWFPDELREIAQEEALDALLFVAQQDEEWVVRYASVVGLQSLAIAIAEAHPTWLAEIQTQFNLMSCNDEVLAIRGRVCVAQQKLQQKIQQLKSDSFHKSIEIKETEEKKSPLTSNDWQDILNQLYEIKRQERINSGSEGDPRRFQQLAAAITETNN.

It belongs to the CpcE/RpcE/PecE family. In terms of assembly, cpcE and CpcF associate to form a lyase.

Its function is as follows. Required for the chromophorylation of the CpcA gene product. The sequence is that of Phycocyanobilin lyase subunit beta (cpcF1) from Pseudanabaena tenuis (strain PCC 7409).